Here is a 118-residue protein sequence, read N- to C-terminus: Basic phospholipase A2 1 (118 aa).

7 cysteine pairs are disulfide-bonded: Cys11–Cys72, Cys26–Cys117, Cys28–Cys44, Cys43–Cys98, Cys50–Cys91, Cys60–Cys84, and Cys78–Cys89. Tyr27, Gly29, and Gly31 together coordinate Ca(2+). His47 is a catalytic residue. Asp48 contributes to the Ca(2+) binding site. Asp92 is a catalytic residue.

Belongs to the phospholipase A2 family. Group I subfamily. D49 sub-subfamily. Ca(2+) serves as cofactor. Expressed by the venom gland.

It is found in the secreted. The enzyme catalyses a 1,2-diacyl-sn-glycero-3-phosphocholine + H2O = a 1-acyl-sn-glycero-3-phosphocholine + a fatty acid + H(+). Its function is as follows. PLA2 catalyzes the calcium-dependent hydrolysis of the 2-acyl groups in 3-sn-phosphoglycerides. The chain is Basic phospholipase A2 1 from Naja melanoleuca (Forest cobra).